Consider the following 318-residue polypeptide: Ribonuclease Z (318 aa).

Zn(2+) is bound by residues H62, H64, D66, H67, H139, D210, and H268. D66 serves as the catalytic Proton acceptor.

It belongs to the RNase Z family. In terms of assembly, homodimer. It depends on Zn(2+) as a cofactor.

It catalyses the reaction Endonucleolytic cleavage of RNA, removing extra 3' nucleotides from tRNA precursor, generating 3' termini of tRNAs. A 3'-hydroxy group is left at the tRNA terminus and a 5'-phosphoryl group is left at the trailer molecule.. In terms of biological role, zinc phosphodiesterase, which displays some tRNA 3'-processing endonuclease activity. Probably involved in tRNA maturation, by removing a 3'-trailer from precursor tRNA. The protein is Ribonuclease Z of Microcystis aeruginosa (strain NIES-843 / IAM M-2473).